The following is a 787-amino-acid chain: MFRLWLLLAGLCGLLASRPGFQNSLLQIVIPEKIQTNTNDSSEIEYEQISYIIPIDEKLYTVHLKQRYFLADNFMIYLYNQGSMNTYSSDIQTQCYYQGNIEGYPDSMVTLSTCSGLRGILQFENVSYGIEPLESAVEFQHVLYKLKNEDNDIAIFIDRSLKEQPMDDNIFISEKSEPAVPDLFPLYLEMHIVVDKTLYDYWGSDSMIVTNKVIEIVGLANSMFTQFKVTIVLSSLELWSDENKISTVGEADELLQKFLEWKQSYLNLRPHDIAYLLIYMDYPRYLGAVFPGTMCITRYSAGVALYPKEITLEAFAVIVTQMLALSLGISYDDPKKCQCSESTCIMNPEVVQSNGVKTFSSCSLRSFQNFISNVGVKCLQNKPQMQKKSPKPVCGNGRLEGNEICDCGTEAQCGPASCCDFRTCVLKDGAKCYKGLCCKDCQILQSGVECRPKAHPECDIAENCNGTSPECGPDITLINGLSCKNNKFICYDGDCHDLDARCESVFGKGSRNAPFACYEEIQSQSDRFGNCGRDRNNKYVFCGWRNLICGRLVCTYPTRKPFHQENGDVIYAFVRDSVCITVDYKLPRTVPDPLAVKNGSQCDIGRVCVNRECVESRIIKASAHVCSQQCSGHGVCDSRNKCHCSPGYKPPNCQIRSKGFSIFPEEDMGSIMERASGKTENTWLLGFLIALPILIVTTAIVLARKQLKKWFAKEEEFPSSESKSEGSTQTYASQSSSEGSTQTYASQTRSESSSQADTSKSKSEDSAEAYTSRSKSQDSTQTQSSSN.

The N-terminal stretch at 1-16 (MFRLWLLLAGLCGLLA) is a signal peptide. S17 is subject to Phosphoserine. The propeptide occupies 17-174 (SRPGFQNSLL…PMDDNIFISE (158 aa)). 2 N-linked (GlcNAc...) asparagine glycosylation sites follow: N39 and N125. Over 175-682 (KSEPAVPDLF…ERASGKTENT (508 aa)) the chain is Extracellular. One can recognise a Peptidase M12B domain in the interval 186–383 (LYLEMHIVVD…VGVKCLQNKP (198 aa)). Intrachain disulfides connect C295-C378, C337-C362, C339-C344, and C450-C471. Residues 391–479 (KPVCGNGRLE…ECGPDITLIN (89 aa)) enclose the Disintegrin domain. N465 and N598 each carry an N-linked (GlcNAc...) asparagine glycan. An EGF-like domain is found at 622-654 (SAHVCSQQCSGHGVCDSRNKCHCSPGYKPPNCQ). 3 disulfides stabilise this stretch: C626-C636, C630-C642, and C644-C653. Residues 683–703 (WLLGFLIALPILIVTTAIVLA) traverse the membrane as a helical segment. The Cytoplasmic segment spans residues 704 to 787 (RKQLKKWFAK…DSTQTQSSSN (84 aa)). The disordered stretch occupies residues 715–787 (EEFPSSESKS…DSTQTQSSSN (73 aa)). Polar residues predominate over residues 728–749 (TQTYASQSSSEGSTQTYASQTR). Positions 771 to 787 (TSRSKSQDSTQTQSSSN) are enriched in low complexity.

In terms of tissue distribution, testis specific.

The protein localises to the membrane. In terms of biological role, may play a role in sperm development and fertilization This is a non-catalytic metalloprotease-like protein. The polypeptide is Disintegrin and metalloproteinase domain-containing protein 32 (ADAM32) (Homo sapiens (Human)).